A 445-amino-acid chain; its full sequence is Beclin-1 (445 aa).

A BH3 motif is present at residues threonine 103–serine 122. Residues aspartate 137–valine 264 are a coiled coil. The interval aspartate 240 to lysine 445 is evolutionary conserved domain (ECD). The required for membrane-association stretch occupies residues tryptophan 420–lysine 445.

Belongs to the beclin family. In terms of assembly, component of the PI3K (PI3KC3/PI3K-III/class III phosphatidylinositol 3-kinase) complex. May be proteolytically processed by caspases; the C-terminal fragment(s) may induce apoptosis.

The protein localises to the cytoplasm. It localises to the golgi apparatus. It is found in the trans-Golgi network membrane. The protein resides in the endosome membrane. Its subcellular location is the endoplasmic reticulum membrane. The protein localises to the mitochondrion membrane. It localises to the cytoplasmic vesicle. It is found in the autophagosome. Functionally, plays a central role in autophagy. Acts as core subunit of different PI3K complex forms that mediate formation of phosphatidylinositol 3-phosphate and are believed to play a role in multiple membrane trafficking pathways: PI3KC3-C1 is involved in initiation of autophagosomes and PI3KC3-C2 in maturation of autophagosomes and endocytosis. Involved in regulation of degradative endocytic trafficking and required for the abscission step in cytokinesis, probably in the context of PI3KC3-C2. Essential for the formation of PI3KC3-C2 but not PI3KC3-C1 PI3K complex forms. Involved in endocytosis including endosome formation in neuronal cells. This chain is Beclin-1 (becn1), found in Xenopus tropicalis (Western clawed frog).